The chain runs to 507 residues: Myocyte-specific enhancer factor 2A (507 aa).

The 55-residue stretch at 3–57 folds into the MADS-box domain; the sequence is RKKIQITRIMDERNRQVTFTKRKFGLMKKAYELSVLCDCEIALIIFNSSNKLFQY. Phosphoserine is present on K30. The mef2-type DNA-binding region spans 58 to 86; it reads ASTDMDKVLLKYTEYNEPHESRTNSDIVE. Residue S59 is modified to Phosphoserine; by CK2. Position 98 is a phosphoserine (S98). Low complexity predominate over residues 173–183; that stretch reads TLTDSSMLSPP. The interval 173–229 is disordered; sequence TLTDSSMLSPPQTTLHRNVSPGAPQRPPSTGNAGGMLSTTDLTVPNGAGSSPVGNGF. Residues 209–229 are compositionally biased toward polar residues; it reads LSTTDLTVPNGAGSSPVGNGF. S235 carries the post-translational modification Phosphoserine. A disordered region spans residues 243-270; sequence GANSLGKVMPTKSPPPPGGGNLGMNSRK. K249 bears the N6-acetyllysine mark. The residue at position 255 (S255) is a Phosphoserine; by MAPK14. The required for interaction with MAPKs stretch occupies residues 266–283; that stretch reads MNSRKPDLRVVIPPSSKG. The segment at 289–296 is beta domain; the sequence is SEEEELEL. Phosphothreonine; by MAPK7 and MAPK14 is present on residues T312 and T319. T312 carries the phosphothreonine; by NLK modification. S355 carries the post-translational modification Phosphoserine; by MAPK7. A disordered region spans residues 397-507; the sequence is NQNISIKSEP…KRMRMDAWVT (111 aa). K403 carries the N6-acetyllysine; alternate modification. K403 is covalently cross-linked (Glycyl lysine isopeptide (Lys-Gly) (interchain with G-Cter in SUMO); alternate). Position 408 is a phosphoserine; by CDK5 (S408). Phosphothreonine is present on T415. Over residues 420-429 the composition is skewed to low complexity; the sequence is QQQQQQQQQQ. The segment covering 430 to 445 has biased composition (pro residues); sequence QPPPPPQPQPQPPQPQ. A Phosphoserine; by MAPK modification is found at S453. Low complexity predominate over residues 453-466; sequence SPVDSLSSSSSSYD. 2 stretches are compositionally biased toward basic and acidic residues: residues 467 to 477 and 488 to 507; these read GSDREDPRGDF and NTED…AWVT.

Belongs to the MEF2 family. In terms of assembly, binds DNA as a homo- or heterodimer. Dimerizes with MEF2D. Interacts with HDAC7. Interacts with PIAS1; the interaction enhances sumoylation. Interacts with HDAC4, HDAC9 and SLC2A4RG. Interacts (via the N-terminal) with MAPK7; the interaction results in the phosphorylation and transcriptional activity of MEF2A. In terms of processing, constitutive phosphorylation on Ser-408 promotes Lys-403 sumoylation thus preventing acetylation at this site. Dephosphorylation on Ser-408 by PPP3CA upon neuron depolarization promotes a switch from sumoylation to acetylation on residue Lys-403 leading to inhibition of dendrite claw differentiation. Phosphorylation on Thr-312 and Thr-319 are the main sites involved in p38 MAPK signaling and activate transcription. Phosphorylated on these sites by MAPK14/p38alpha and MAPK11/p38beta, but not by MAPK13/p38delta nor by MAPK12/p38gamma. Phosphorylation on Ser-408 by CDK5 induced by neurotoxicity inhibits MEF2A transcriptional activation leading to apoptosis of cortical neurons. Phosphorylation on Thr-312, Thr-319 and Ser-355 can be induced by EGF. Post-translationally, sumoylation on Lys-403 is enhanced by PIAS1 and represses transcriptional activity. Phosphorylation on Ser-408 is required for sumoylation. Has no effect on nuclear location nor on DNA binding. Sumoylated with SUMO1 and, to a lesser extent with SUMO2 and SUMO3. PIASx facilitates sumoylation in postsynaptic dendrites in the cerebellar cortex and promotes their morphogenesis. Acetylation on Lys-403 activates transcriptional activity. Acetylated by p300 on several sites in diffentiating myocytes. Acetylation on Lys-4 increases DNA binding and transactivation. Hyperacetylation by p300 leads to enhanced cardiac myocyte growth and heart failure. In terms of processing, proteolytically cleaved in cerebellar granule neurons on several sites by caspase 3 and caspase 7 following neurotoxicity. Preferentially cleaves the CDK5-mediated hyperphosphorylated form which leads to neuron apoptosis and transcriptional inactivation. Isoform MEF2 and isoform MEFA are expressed only in skeletal and cardiac muscle and in the brain. Isoform RSRFC4 and isoform RSRFC9 are expressed in all tissues examined.

Its subcellular location is the nucleus. Functionally, transcriptional activator which binds specifically to the MEF2 element, 5'-YTA[AT](4)TAR-3', found in numerous muscle-specific genes. Also involved in the activation of numerous growth factor- and stress-induced genes. Mediates cellular functions not only in skeletal and cardiac muscle development, but also in neuronal differentiation and survival. Plays diverse roles in the control of cell growth, survival and apoptosis via p38 MAPK signaling in muscle-specific and/or growth factor-related transcription. In cerebellar granule neurons, phosphorylated and sumoylated MEF2A represses transcription of NUR77 promoting synaptic differentiation. Associates with chromatin to the ZNF16 promoter. This chain is Myocyte-specific enhancer factor 2A (MEF2A), found in Homo sapiens (Human).